Reading from the N-terminus, the 206-residue chain is Large ribosomal subunit protein uL4 (206 aa).

The segment at 44–87 is disordered; it reads KRQGTHATKTRGMKRGGGAKPWRQKGTGRARAGSTRSPLWRGGG.

The protein belongs to the universal ribosomal protein uL4 family. In terms of assembly, part of the 50S ribosomal subunit.

Its function is as follows. One of the primary rRNA binding proteins, this protein initially binds near the 5'-end of the 23S rRNA. It is important during the early stages of 50S assembly. It makes multiple contacts with different domains of the 23S rRNA in the assembled 50S subunit and ribosome. Functionally, forms part of the polypeptide exit tunnel. This Maridesulfovibrio salexigens (strain ATCC 14822 / DSM 2638 / NCIMB 8403 / VKM B-1763) (Desulfovibrio salexigens) protein is Large ribosomal subunit protein uL4.